A 159-amino-acid chain; its full sequence is S-ribosylhomocysteine lyase (159 aa).

Residues His-53, His-57, and Cys-124 each coordinate Fe cation.

Belongs to the LuxS family. Homodimer. Fe cation serves as cofactor.

It carries out the reaction S-(5-deoxy-D-ribos-5-yl)-L-homocysteine = (S)-4,5-dihydroxypentane-2,3-dione + L-homocysteine. Its function is as follows. Involved in the synthesis of autoinducer 2 (AI-2) which is secreted by bacteria and is used to communicate both the cell density and the metabolic potential of the environment. The regulation of gene expression in response to changes in cell density is called quorum sensing. Catalyzes the transformation of S-ribosylhomocysteine (RHC) to homocysteine (HC) and 4,5-dihydroxy-2,3-pentadione (DPD). This is S-ribosylhomocysteine lyase from Desulfotalea psychrophila (strain LSv54 / DSM 12343).